A 307-amino-acid chain; its full sequence is Homoserine O-acetyltransferase (307 aa).

The active-site Acyl-thioester intermediate is Cys-142. Positions 163 and 192 each coordinate substrate. The Proton acceptor role is filled by His-235. The active site involves Glu-237. Arg-249 provides a ligand contact to substrate.

Belongs to the MetA family.

The protein localises to the cytoplasm. The catalysed reaction is L-homoserine + acetyl-CoA = O-acetyl-L-homoserine + CoA. It participates in amino-acid biosynthesis; L-methionine biosynthesis via de novo pathway; O-acetyl-L-homoserine from L-homoserine: step 1/1. In terms of biological role, transfers an acetyl group from acetyl-CoA to L-homoserine, forming acetyl-L-homoserine. The protein is Homoserine O-acetyltransferase of Sinorhizobium fredii (strain NBRC 101917 / NGR234).